Here is a 328-residue protein sequence, read N- to C-terminus: UPF0194 membrane protein YPA_1093 (328 aa).

A signal peptide spans 1-22 (MNRKKIIVAAVIVALLATLAYG). Coiled-coil stretches lie at residues 80-109 (YLNA…REEE) and 141-209 (KAVS…ILLA).

It belongs to the UPF0194 family.

It localises to the periplasm. In Yersinia pestis bv. Antiqua (strain Antiqua), this protein is UPF0194 membrane protein YPA_1093.